The chain runs to 110 residues: Cytochrome c oxidase subunit 4B (110 aa).

3 helical membrane passes run 27–47, 50–70, and 88–108; these read YQVL…LTVA, GVGS…QVIF, and LFLY…VTII.

It belongs to the cytochrome c oxidase bacterial subunit 4 family.

It is found in the cell membrane. It carries out the reaction 4 Fe(II)-[cytochrome c] + O2 + 8 H(+)(in) = 4 Fe(III)-[cytochrome c] + 2 H2O + 4 H(+)(out). The sequence is that of Cytochrome c oxidase subunit 4B (ctaF) from Bacillus subtilis (strain 168).